The following is a 481-amino-acid chain: Cysteine protease atg-4.1 (481 aa).

Cys112 acts as the Nucleophile in catalysis. Catalysis depends on residues Asp313 and His315. The tract at residues 462–481 (DVHTEEEDADEDNDDDVANA) is disordered.

Belongs to the peptidase C54 family.

It is found in the cytoplasm. It carries out the reaction [protein]-C-terminal L-amino acid-glycyl-phosphatidylethanolamide + H2O = [protein]-C-terminal L-amino acid-glycine + a 1,2-diacyl-sn-glycero-3-phosphoethanolamine. Cysteine protease required for autophagy. Cleaves the C-terminal amino acid of ATG8 family proteins lgg-1, to reveal a C-terminal glycine. Exposure of the glycine at the C-terminus is essential for ATG8 proteins conjugation to phosphatidylethanolamine (PE) and insertion to membranes, which is necessary for autophagy. Its cleavage activity is functionally redundant to atg-4.2, but it cleaves lgg-1 precursors more efficiently than atg-4.2. Acts redundantly with atg-4.2 to promote the lgg-1 delipidation to release the protein from membranes, which facilitates multiple events during macroautophagy. Unlike atg-4.2 does not seem to be required for autophagosome maturation. In Caenorhabditis elegans, this protein is Cysteine protease atg-4.1.